The sequence spans 168 residues: Photosystem I assembly protein Ycf3 (168 aa).

TPR repeat units lie at residues 35–68 (AFTY…EIDP), 72–105 (SYIL…NPFL), and 120–153 (GEKA…TPGN).

It belongs to the Ycf3 family.

The protein localises to the plastid membrane. Its function is as follows. Essential for the assembly of the photosystem I (PSI) complex. May act as a chaperone-like factor to guide the assembly of the PSI subunits. This chain is Photosystem I assembly protein Ycf3, found in Cuscuta exaltata (Tall dodder).